We begin with the raw amino-acid sequence, 324 residues long: tRNA-modifying protein YgfZ (324 aa).

Tryptophan 184 serves as a coordination point for folate.

Belongs to the tRNA-modifying YgfZ family.

The protein resides in the cytoplasm. Its function is as follows. Folate-binding protein involved in regulating the level of ATP-DnaA and in the modification of some tRNAs. It is probably a key factor in regulatory networks that act via tRNA modification, such as initiation of chromosomal replication. The polypeptide is tRNA-modifying protein YgfZ (Vibrio vulnificus (strain YJ016)).